Reading from the N-terminus, the 322-residue chain is MDPTVPVFGTKLTPINGREETPCYNQTLSFTVLTCIISLVGLTGNAVVLWLLGYRMRRNAVSIYILNLAAADFLFLSFQIIRLPLRLINISHLIRKILVSVMTFPYFTGLSMLSAISTERCLSVLWPIWYRCRRPTHLSAVVCVLLWGLSLLFSMLEWRFCDFLFSGADSSWCETSDFIPVAWLIFLCVVLCVSSLVLLVRILCGSRKMPLTRLYVTILLTVLVFLLCGLPFGILGALIYRMHLNLEVLYCHVYLVCMSLSSLNSSANPIIYFFVGSFRQRQNRQNLKLVLQRALQDKPEVDKGEGQLPEESLELSGSRLGP.

At 1 to 31 (MDPTVPVFGTKLTPINGREETPCYNQTLSFT) the chain is on the extracellular side. N-linked (GlcNAc...) asparagine glycosylation occurs at N25. The helical transmembrane segment at 32-52 (VLTCIISLVGLTGNAVVLWLL) threads the bilayer. Over 53–60 (GYRMRRNA) the chain is Cytoplasmic. The chain crosses the membrane as a helical span at residues 61 to 81 (VSIYILNLAAADFLFLSFQII). The Extracellular segment spans residues 82–96 (RLPLRLINISHLIRK). N-linked (GlcNAc...) asparagine glycosylation is present at N89. Residues 97 to 117 (ILVSVMTFPYFTGLSMLSAIS) traverse the membrane as a helical segment. Topologically, residues 118–137 (TERCLSVLWPIWYRCRRPTH) are cytoplasmic. A helical membrane pass occupies residues 138–158 (LSAVVCVLLWGLSLLFSMLEW). Residues 159–177 (RFCDFLFSGADSSWCETSD) lie on the Extracellular side of the membrane. Residues 178-198 (FIPVAWLIFLCVVLCVSSLVL) form a helical membrane-spanning segment. Residues 199–218 (LVRILCGSRKMPLTRLYVTI) are Cytoplasmic-facing. The chain crosses the membrane as a helical span at residues 219 to 239 (LLTVLVFLLCGLPFGILGALI). Residues 240–254 (YRMHLNLEVLYCHVY) are Extracellular-facing. Residues 255-275 (LVCMSLSSLNSSANPIIYFFV) traverse the membrane as a helical segment. Residues 276–322 (GSFRQRQNRQNLKLVLQRALQDKPEVDKGEGQLPEESLELSGSRLGP) are Cytoplasmic-facing. The interval 299–322 (PEVDKGEGQLPEESLELSGSRLGP) is disordered.

The protein belongs to the G-protein coupled receptor 1 family. Mas subfamily. In terms of tissue distribution, uniquely localized in a subset of small dorsal root and trigeminal sensory neurons.

Its subcellular location is the cell membrane. In terms of biological role, orphan receptor. Probably involved in the function of nociceptive neurons. May regulate nociceptor function and/or development, including the sensation or modulation of pain. Potently activated by enkephalins. This is Mas-related G-protein coupled receptor member X4 (MRGPRX4) from Homo sapiens (Human).